The sequence spans 121 residues: Phospholipase A2 homolog ECO_00035 (121 aa).

Cystine bridges form between cysteine 25-cysteine 114, cysteine 27-cysteine 43, cysteine 42-cysteine 94, cysteine 48-cysteine 121, cysteine 49-cysteine 87, cysteine 56-cysteine 80, and cysteine 74-cysteine 85. Residues 104 to 116 are important for membrane-damaging activities in eukaryotes and bacteria; heparin-binding; it reads KKYKIYPNILCRG.

Belongs to the phospholipase A2 family. Group II subfamily. S49 sub-subfamily. In terms of assembly, monomer. In terms of tissue distribution, expressed by the venom gland.

The protein resides in the secreted. Snake venom phospholipase A2 homolog that lacks enzymatic activity. Shows high myotoxin activities and displays edema-inducing activities. Has cytotoxic activities against HUVEC cells (LC(50)=4.9 uL) and human lung adenocarcinoma A549 cells (LC(50)=3.5 uL). The chain is Phospholipase A2 homolog ECO_00035 from Echis coloratus (Carpet viper).